A 150-amino-acid chain; its full sequence is SsrA-binding protein (150 aa).

The protein belongs to the SmpB family.

It localises to the cytoplasm. Its function is as follows. Required for rescue of stalled ribosomes mediated by trans-translation. Binds to transfer-messenger RNA (tmRNA), required for stable association of tmRNA with ribosomes. tmRNA and SmpB together mimic tRNA shape, replacing the anticodon stem-loop with SmpB. tmRNA is encoded by the ssrA gene; the 2 termini fold to resemble tRNA(Ala) and it encodes a 'tag peptide', a short internal open reading frame. During trans-translation Ala-aminoacylated tmRNA acts like a tRNA, entering the A-site of stalled ribosomes, displacing the stalled mRNA. The ribosome then switches to translate the ORF on the tmRNA; the nascent peptide is terminated with the 'tag peptide' encoded by the tmRNA and targeted for degradation. The ribosome is freed to recommence translation, which seems to be the essential function of trans-translation. This is SsrA-binding protein from Magnetococcus marinus (strain ATCC BAA-1437 / JCM 17883 / MC-1).